We begin with the raw amino-acid sequence, 370 residues long: Lysophosphatidic acid receptor 4 (370 aa).

The Extracellular portion of the chain corresponds to 1-43 (MGDRRFIDFQFQDLNSSLRPRLGNATANNTCIVDDSFKYNLNG). N-linked (GlcNAc...) asparagine glycosylation is found at Asn-15, Asn-24, and Asn-28. Residues 44–64 (AVYSVVFILGLITNSASLFVF) form a helical membrane-spanning segment. The Cytoplasmic segment spans residues 65-73 (CFRMKMRSE). Residues 74–94 (TAIFITNLALSDLLFVCTLPF) traverse the membrane as a helical segment. Topologically, residues 95 to 112 (KIFYNFNRHWPFGDTLCK) are extracellular. A disulfide bridge links Cys-111 with Cys-188. Residues 113–133 (ISGTAFLTNIYGSMLFLTCIS) form a helical membrane-spanning segment. Residues 134–155 (VDRFLAIVYPFRSRTIRTRRNS) lie on the Cytoplasmic side of the membrane. The chain crosses the membrane as a helical span at residues 156–176 (AIVCAGVWILVLSGGISASLF). Over 177–203 (STTNVNNATTTCFEGFSKRVWKTYLSK) the chain is Extracellular. Asn-183 is a glycosylation site (N-linked (GlcNAc...) asparagine). Residues 204 to 224 (ITIFIEVVGFIIPLILNVSCS) traverse the membrane as a helical segment. The Cytoplasmic portion of the chain corresponds to 225–254 (SVVLRTLRKPATLSQIGTNKKKVLKMITVH). Residues 255–275 (MAVFVVCFVPYNSVLFLYALV) form a helical membrane-spanning segment. At 276-294 (RSQAITNCLLERFAKIMYP) the chain is on the extracellular side. The chain crosses the membrane as a helical span at residues 295 to 315 (ITLCLATLNCCFDPFIYYFTL). Residues 316–370 (ESFQKSFYINTHIRMESLFKTETPLTPKPSLPAIQEEVSDQTTNNGGELMLESTF) are Cytoplasmic-facing.

The protein belongs to the G-protein coupled receptor 1 family.

The protein resides in the cell membrane. Receptor for lysophosphatidic acid (LPA), a mediator of diverse cellular activities. Transduces a signal by increasing the intracellular calcium ions and by stimulating adenylyl cyclase activity. The rank order of potency for agonists of this receptor is 1-oleoyl- &gt; 1-stearoyl- &gt; 1-palmitoyl- &gt; 1-myristoyl- &gt; 1-alkyl- &gt; 1-alkenyl-LPA. The sequence is that of Lysophosphatidic acid receptor 4 (Lpar4) from Mus musculus (Mouse).